A 244-amino-acid chain; its full sequence is Orotidine 5'-phosphate decarboxylase (244 aa).

Residues D12, K34, 61–70 (DLKLFDIPNT), T125, R187, Q196, G216, and R217 contribute to the substrate site. The active-site Proton donor is the K63.

The protein belongs to the OMP decarboxylase family. Type 1 subfamily. Homodimer.

It carries out the reaction orotidine 5'-phosphate + H(+) = UMP + CO2. The protein operates within pyrimidine metabolism; UMP biosynthesis via de novo pathway; UMP from orotate: step 2/2. Functionally, catalyzes the decarboxylation of orotidine 5'-monophosphate (OMP) to uridine 5'-monophosphate (UMP). The chain is Orotidine 5'-phosphate decarboxylase from Dictyoglomus turgidum (strain DSM 6724 / Z-1310).